We begin with the raw amino-acid sequence, 330 residues long: PDZ and LIM domain protein 4 (330 aa).

Positions 1–84 (MTHAVTLRGP…HLTLSVSRPE (84 aa)) constitute a PDZ domain. 2 disordered regions span residues 104–154 (DPEA…NEVT) and 219–239 (EAGE…KPAA). Residues Ser-111, Ser-115, Ser-118, Ser-119, Ser-124, and Ser-134 each carry the phosphoserine modification. Positions 111–122 (SPATSRRSSISG) are enriched in polar residues. One can recognise an LIM zinc-binding domain in the interval 255–305 (CTRCGHGIVGTIVKARDKLYHPECFMCSDCGLNLKQRGYFFLDERLYCENH).

Homodimer. Interacts (via C-terminus only or via combined C-terminus and LIM domain, but not LIM domain only) with PTPN13 (via the second or fourth PDZ domains). Found in a complex with PTPN13 and TRIP6. Interacts (via PDZ domain) with ACTN1 and ACTN2 (via C-terminal SDL residues). Interacts (via PDZ domain) with TRIP6 (via the second LIM domain or via the third LIM domain plus C-terminus). Interacts (via LIM domain) with GRIA1 (via C-terminus); this interaction as well as the interaction with alpha-actinin is required for their colocalization in early endosomes. Interacts with PDLIM1. Forms (via LIM domain) a heterodimer with PDLIM3. Interacts directly with SRC (via kinase domain and to a lesser extent the SH2 domain). Phosphorylated on tyrosine residue(s). Can be dephosphorylated by PTPN13. In terms of tissue distribution, detected in several tissues, most prominent in brain and heart of adults. Expressed in embryonic fibroblasts.

It is found in the cytoplasm. The protein resides in the cytoskeleton. It localises to the cell projection. The protein localises to the dendritic spine. Its subcellular location is the early endosome membrane. It is found in the recycling endosome membrane. The protein resides in the nucleus. It localises to the perinuclear region. The protein localises to the lamellipodium. Its subcellular location is the synapse. It is found in the synaptosome. In terms of biological role, suppresses SRC activation by recognizing and binding to active SRC and facilitating PTPN13-mediated dephosphorylation of SRC 'Tyr-419' leading to its inactivation. Inactivated SRC dissociates from this protein allowing the initiation of a new SRC inactivation cycle. Involved in reorganization of the actin cytoskeleton. In nonmuscle cells, binds to ACTN1 (alpha-actinin-1), increases the affinity of ACTN1 to F-actin (filamentous actin), and promotes formation of actin stress fibers. Involved in regulation of the synaptic AMPA receptor transport in dendritic spines of hippocampal pyramidal neurons directing the receptors toward an insertion at the postsynaptic membrane. Links endosomal surface-internalized GRIA1-containing AMPA receptors to the alpha-actinin/actin cytoskeleton. Increases AMPA receptor-mediated excitatory postsynaptic currents in neurons. This is PDZ and LIM domain protein 4 (Pdlim4) from Rattus norvegicus (Rat).